Consider the following 117-residue polypeptide: Hydrogenase maturation factor HypA (117 aa).

His2 serves as a coordination point for Ni(2+). 4 residues coordinate Zn(2+): Cys73, Cys76, Cys92, and Cys95.

It belongs to the HypA/HybF family.

In terms of biological role, involved in the maturation of [NiFe] hydrogenases. Required for nickel insertion into the metal center of the hydrogenase. In Solidesulfovibrio magneticus (strain ATCC 700980 / DSM 13731 / RS-1) (Desulfovibrio magneticus), this protein is Hydrogenase maturation factor HypA.